The primary structure comprises 160 residues: Cytochrome b6-f complex subunit 4 (160 aa).

Helical transmembrane passes span 36 to 56, 95 to 115, and 131 to 151; these read LLYI…GLAV, LLGV…PFLE, and TVFL…TLPI.

The protein belongs to the cytochrome b family. PetD subfamily. In terms of assembly, the 4 large subunits of the cytochrome b6-f complex are cytochrome b6, subunit IV (17 kDa polypeptide, petD), cytochrome f and the Rieske protein, while the 4 small subunits are petG, petL, petM and petN. The complex functions as a dimer.

It localises to the plastid. It is found in the chloroplast thylakoid membrane. Component of the cytochrome b6-f complex, which mediates electron transfer between photosystem II (PSII) and photosystem I (PSI), cyclic electron flow around PSI, and state transitions. The protein is Cytochrome b6-f complex subunit 4 of Oryza sativa (Rice).